The sequence spans 208 residues: Kininogen-1b (208 aa).

A signal peptide spans 1 to 23 (MRLWFCLSFFIVLCLEHFPETLA). A compositionally biased stretch (basic and acidic residues) spans 27 to 44 (NVPESEEKTEQYLRDLPK). A disordered region spans residues 27 to 208 (NVPESEEKTE…RGKFHSQSHV (182 aa)).

Belongs to the bradykinin-related peptide family. In terms of tissue distribution, expressed by the skin glands.

It localises to the secreted. In terms of biological role, in vitro, produces constriction of guinea pig ileum smooth muscle. May target bradykinin receptors (BDKRB). The chain is Kininogen-1b from Bombina maxima (Giant fire-bellied toad).